A 495-amino-acid polypeptide reads, in one-letter code: MTDKDIPDEWDTISEDQIKNNLLTLEISNKLKELKLLEEEYEKLEEKEKEIENKELNKTDNKIKEFIKNEIKKGGEEINKEQEQDGEEEEPLLLINFTKWSYNKIKYIGGGKIENQDLFDRLLNKLNSEEQFFITMTDDLLERELAFHTTNKQWRDDIKQLEQAYKGDYFSLLSYPPMLGGFLLESIWSKIKERTEWKSVNILKCIYLAKTNRSLLYKHNMALAIEFMALEQKLLGPTAKRLKDEEDLEYKIKLRQYEEIMQKRYENEINEGIIKNLQQVIYTNEGISNNLNRINNNKINEINDDYNNNNNENYSGSDNDDGSYCSTCDGSGSDYDNDENNDDENNDENNNNNNNNNNNNNNNNDEDRMIEEIEGDDTTSTSFQQSDDDEADNELDEEDNRKNKKEKLIEERKIKEIEAERIHKENEKRKIEAPPPPVLNILDKIIAMIFSKLTVAQSNKESHYQMLNRLESSIKETWIEEFGCLPPNCLWREEQ.

The span at 305 to 317 (DYNNNNNENYSGS) shows a compositional bias: low complexity. Positions 305–404 (DYNNNNNENY…LDEEDNRKNK (100 aa)) are disordered. Positions 335 to 347 (YDNDENNDDENND) are enriched in acidic residues. Positions 348–363 (ENNNNNNNNNNNNNNN) are enriched in low complexity. The span at 386 to 398 (SDDDEADNELDEE) shows a compositional bias: acidic residues.

This is an uncharacterized protein from Dictyostelium discoideum (Social amoeba).